Here is a 1679-residue protein sequence, read N- to C-terminus: GRIP and coiled-coil domain-containing protein 2 (1679 aa).

An N-acetylmethionine modification is found at Met1. Disordered regions lie at residues 1–23 (MEDS…KLET) and 1466–1522 (LKSE…SAGT). Residues 35 to 1469 (KQMMLLQKAK…ETQLFQLKSE (1435 aa)) are a coiled coil. Phosphoserine occurs at positions 1474 and 1478. Residues 1474–1483 (SPASSHQPSK) show a composition bias toward polar residues. The segment at 1569–1608 (HLNGLLRETEATNAILMEQIKLLKSEIRRLERNQEREKSV) is mediates interaction with RAB6A. Residues 1569–1679 (HLNGLLRETE…SYLHSWSGLR (111 aa)) form a mediates interaction with RAB9A region. The GRIP domain maps to 1604–1654 (REKSVANLEYLKNVLLRFIFLKPGSERERLLPVIDTMLQLSPEEKGKLATV).

Homodimer. Interacts (via GRIP domain) with RAB6A (preferentially in its GTP-bound form). May interact (RAB6A-dependent) with ARL1; might be involved in GCC2 Golgi localization. Interacts with CLASP1 and CLASP2; recruits both proteins to membranes of the TGN. Interacts with STX16. Interacts (probably via GRIP domain) with RAB9A (preferentially in its GTP-bound form).

Its subcellular location is the cytoplasm. It localises to the golgi apparatus. It is found in the trans-Golgi network membrane. In terms of biological role, golgin which probably tethers transport vesicles to the trans-Golgi network (TGN) and regulates vesicular transport between the endosomes and the Golgi. As a RAB9A effector it is involved in recycling of the mannose 6-phosphate receptor from the late endosomes to the TGN. May also play a role in transport between the recycling endosomes and the Golgi. Required for maintenance of the Golgi structure, it is involved in the biogenesis of noncentrosomal, Golgi-associated microtubules through recruitment of CLASP1 and CLASP2. The polypeptide is GRIP and coiled-coil domain-containing protein 2 (Gcc2) (Rattus norvegicus (Rat)).